The chain runs to 348 residues: Phosphoribosylformylglycinamidine cyclo-ligase (348 aa).

This sequence belongs to the AIR synthase family.

It is found in the cytoplasm. It carries out the reaction 2-formamido-N(1)-(5-O-phospho-beta-D-ribosyl)acetamidine + ATP = 5-amino-1-(5-phospho-beta-D-ribosyl)imidazole + ADP + phosphate + H(+). Its pathway is purine metabolism; IMP biosynthesis via de novo pathway; 5-amino-1-(5-phospho-D-ribosyl)imidazole from N(2)-formyl-N(1)-(5-phospho-D-ribosyl)glycinamide: step 2/2. The polypeptide is Phosphoribosylformylglycinamidine cyclo-ligase (Cereibacter sphaeroides (strain ATCC 17029 / ATH 2.4.9) (Rhodobacter sphaeroides)).